Reading from the N-terminus, the 686-residue chain is MATDPRKILVTCALPYANGSIHLGHMLEHIQADIWVRYQRLRGNDVNFICADDAHGTPIMLKAQQMGISPEEMIAAVSEEHQKDFAGFDISFDNYHSTHSDENRELASHIYLELKKNGFITSRTISQLFDPEKEMFLPDRFVKGTCPKCKAEEQYGDNCDNCGETYSPTDLINPKSAVSGATPVMKDSEHFFFDLPQFESMLKEWTRSGSLQTETANKMQEWFESGLQQWDISRDAPYFGFEIPGETNKFFYVWLDAPIGYMGSFKNLCNKRDDLNFDEYWKKDSTTELYHFIGKDIVYFHSLFWPAMLDGAGFRKPNNVFVHGYVTVNGAKMSKSKGTFIKAGTYLNHLDPECLRYYYAAKLNSRIDDLDLNLEDFTQRVNSDVVNKIVNLASRNAGFITKRFDGKLADNFAEPELYNEFIAAADRIAELYETREFGRAIREITALADKANQYIDEKAPWVLAKEEGKEQELQEVSSVGINLFRVLMAYLKPVMPELAARTEAFLNETLTWEGVAQPLVAHEITKFKALFARIDPKKVEAMIEESKEDAAIEMAAKEKAEAEKEKASQTELDKDPIADEIEFDAFEAVDMRIARIISCEEVPKANKLLKFQLDIGGETRQVFSGIKSAYKPEELEGKLTVMVANLKPRKMKFGMSEGMILAAGPGGKDLWILEPHEGAQPGMRVM.

The short motif at 15 to 25 is the 'HIGH' region element; it reads PYANGSIHLGH. Zn(2+) is bound by residues C146, C149, C159, and C162. Positions 332–336 match the 'KMSKS' region motif; the sequence is KMSKS. K335 serves as a coordination point for ATP. In terms of domain architecture, tRNA-binding spans 585 to 686; the sequence is AFEAVDMRIA…EGAQPGMRVM (102 aa).

Belongs to the class-I aminoacyl-tRNA synthetase family. MetG type 1 subfamily. As to quaternary structure, homodimer. It depends on Zn(2+) as a cofactor.

It localises to the cytoplasm. It catalyses the reaction tRNA(Met) + L-methionine + ATP = L-methionyl-tRNA(Met) + AMP + diphosphate. In terms of biological role, is required not only for elongation of protein synthesis but also for the initiation of all mRNA translation through initiator tRNA(fMet) aminoacylation. The chain is Methionine--tRNA ligase from Aliivibrio fischeri (strain MJ11) (Vibrio fischeri).